A 360-amino-acid chain; its full sequence is Putative agmatine deiminase (360 aa).

Cys353 serves as the catalytic Amidino-cysteine intermediate.

It belongs to the agmatine deiminase family.

The catalysed reaction is agmatine + H2O = N-carbamoylputrescine + NH4(+). This is Putative agmatine deiminase from Vibrio parahaemolyticus serotype O3:K6 (strain RIMD 2210633).